The sequence spans 223 residues: N-terminal Xaa-Pro-Lys N-methyltransferase 1 (223 aa).

S-adenosyl-L-methionine contacts are provided by residues Gly-69, Arg-74, Asp-91–Thr-93, Leu-119–Gln-120, and Gln-135.

The protein belongs to the methyltransferase superfamily. NTM1 family.

The protein resides in the nucleus. It carries out the reaction N-terminal L-alanyl-L-prolyl-L-lysyl-[protein] + 3 S-adenosyl-L-methionine = N-terminal N,N,N-trimethyl-L-alanyl-L-prolyl-L-lysyl-[protein] + 3 S-adenosyl-L-homocysteine + 3 H(+). It catalyses the reaction N-terminal L-seryl-L-prolyl-L-lysyl-[protein] + 3 S-adenosyl-L-methionine = N-terminal N,N,N-trimethyl-L-seryl-L-prolyl-L-lysyl-[protein] + 3 S-adenosyl-L-homocysteine + 3 H(+). The enzyme catalyses N-terminal L-prolyl-L-prolyl-L-lysyl-[protein] + 2 S-adenosyl-L-methionine = N-terminal N,N-dimethyl-L-prolyl-L-prolyl-L-lysyl-[protein] + 2 S-adenosyl-L-homocysteine + 2 H(+). In terms of biological role, distributive alpha-N-methyltransferase that methylates the N-terminus of target proteins containing the N-terminal motif [Ala/Gly/Pro/Ser]-Pro-Lys when the initiator Met is cleaved. Specifically catalyzes mono-, di- or tri-methylation of the exposed alpha-amino group of the Ala, Gly or Ser residue in the [Ala/Gly/Ser]-Pro-Lys motif and mono- or di-methylation of Pro in the Pro-Pro-Lys motif. Required during mitosis for normal bipolar spindle formation and chromosome segregation via its action on target proteins. The polypeptide is N-terminal Xaa-Pro-Lys N-methyltransferase 1 (ntmt1) (Danio rerio (Zebrafish)).